A 518-amino-acid chain; its full sequence is MKMRTGKKGFLSILLAFLLVITSIPFTLVDVEAHHNGTNGTMMQYFEWYLPNDGNHWNRLNSDASNLKSKGITAVWIPPAWKGASQNDVGYGAYDLYDLGEFNQKGTVRTKYGTRSQLQAAVTSLKNNGIQVYGDVVMNHKGGADATEMVRAVEVNPNNRNQEVTGEYTIEAWTRFDFPGRGNTHSSFKWRWYHFDGVDWDQSRRLNNRIYKFRGHGKAWDWEVDTENGNYDYLMYADIDMDHPEVVNELRNWGVWYTNTLGLDGFRIDAVKHIKYSFTRDWINHVRSATGKNMFAVAEFWKNDLGAIENYLQKTNWNHSVFDVPLHYNLYNASKSGGNYDMRNIFNGTVVQRHPSHAVTFVDNHDSQPEEALESFVEEWFKPLAYALTLTREQGYPSVFYGDYYGIPTHGVPAMRSKIDPILEARQKYAYGKQNDYLDHHNIIGWTREGNTAHPNSGLATIMSDGAGGSKWMFVGRNKAGQVWSDITGNRTGTVTINADGWGNFSVNGGSVSIWVNK.

Residues 1–33 (MKMRTGKKGFLSILLAFLLVITSIPFTLVDVEA) form the signal peptide. Positions 139, 196, 219, 221, 232, 238, 240, and 242 each coordinate Ca(2+). Asp-196 contacts Na(+). Positions 221, 232, and 238 each coordinate Na(+). Asp-269 functions as the Nucleophile in the catalytic mechanism. His-273 contributes to the Ca(2+) binding site. Glu-299 acts as the Proton donor in catalysis.

It belongs to the glycosyl hydrolase 13 family. The cofactor is Ca(2+). Requires Na(+) as cofactor.

The protein resides in the secreted. It catalyses the reaction Hydrolysis of (1-&gt;4)-alpha-D-glucosidic linkages in amylaceous polysaccharides, to remove successive maltohexaose residues from the non-reducing chain ends.. The protein operates within glycan degradation; starch degradation. In Bacillus sp. (strain 707), this protein is Glucan 1,4-alpha-maltohexaosidase.